Here is a 137-residue protein sequence, read N- to C-terminus: Large ribosomal subunit protein uL16 (137 aa).

This sequence belongs to the universal ribosomal protein uL16 family. As to quaternary structure, part of the 50S ribosomal subunit.

Functionally, binds 23S rRNA and is also seen to make contacts with the A and possibly P site tRNAs. The chain is Large ribosomal subunit protein uL16 from Xanthomonas campestris pv. campestris (strain 8004).